The primary structure comprises 383 residues: uncharacterized protein (383 aa).

10 consecutive transmembrane segments (helical) span residues 25–45 (LWVA…PAVA), 53–73 (IYNV…PIMV), 103–123 (FTMV…LLTA), 139–159 (IAGC…MWGY), 166–186 (GLTL…YAPL), 200–220 (WQTI…AGIY), 238–258 (FLHY…ILLF), 272–292 (IFLI…ITYV), 309–329 (LIGA…LFGL), and 332–352 (GAAL…LMLV).

Belongs to the arsenical resistance-3 (ACR3) (TC 2.A.59) family.

Its subcellular location is the cell membrane. This is an uncharacterized protein from Synechocystis sp. (strain ATCC 27184 / PCC 6803 / Kazusa).